Here is a 720-residue protein sequence, read N- to C-terminus: MITANSFERTIGGRKLVIESGKLARLADAAITIRYADTELLVTLCSAKKPREGVDFLPLTIDYEERMYAAGKIPGGFIRREGRPSEQAILAGRLTDRPLRPLLPKEWRNDLQIIITVIASDKENDADIWGVVGASTVLAMSEIPYEGPVGASRIGYINGEFVLNPTFAQLESSQLDLVVVSTRKAVVMIEAGSKEIPEDIMINAIEFAHKANQELIDLQDEIRAKLGKEKLPVPVLEIPEEVKTAVAAFVKGRVNEALSHQDKTARENAVEGLQAELVAALSETFAEGDILAAYDKEIKKAIRSTILEKDIRVNGRGIKQLRQLDAETGLLPRVHGSALFTRGDTQVMAITTLGSLQESQQLDGLSAEDTKRFMLHYNFAPFSTGEVKRSGSPGRREIGHGALAERALVPILPTPEEFPYTIRLVADVVGSSGSTSMGSVCSSSLSLMDAGVPVKKAVAGISIGLITGENGTYCTITDIEGIEDNYGDMDFKVAGTRDGITAIQVDMKVKGISFDIIRDAIYQAKEARYNILDVMDKALAQPKTELSPYAPRMYKINIDPSKIGSVIGSGGKTIRSIIEQTNTTVDIENDGTVVIGAIDEASAKKAIKIIEDLTKDIEAGSIYTGKVTRIMTFGAFVEILPGKEGMVHISELADHRVEKVEDIVKVGDDITVKVIEIDNQGRVNLSHRVILNPNAVPISRNRDSQPRRPGPFRPSDRSNS.

Residues Asp484 and Asp490 each contribute to the Mg(2+) site. Positions 551–610 (PRMYKINIDPSKIGSVIGSGGKTIRSIIEQTNTTVDIENDGTVVIGAIDEASAKKAIKII) constitute a KH domain. The 69-residue stretch at 620 to 688 (GSIYTGKVTR…NQGRVNLSHR (69 aa)) folds into the S1 motif domain. A disordered region spans residues 697–720 (PISRNRDSQPRRPGPFRPSDRSNS).

This sequence belongs to the polyribonucleotide nucleotidyltransferase family. The cofactor is Mg(2+).

It is found in the cytoplasm. It catalyses the reaction RNA(n+1) + phosphate = RNA(n) + a ribonucleoside 5'-diphosphate. In terms of biological role, involved in mRNA degradation. Catalyzes the phosphorolysis of single-stranded polyribonucleotides processively in the 3'- to 5'-direction. This Dehalococcoides mccartyi (strain ATCC BAA-2100 / JCM 16839 / KCTC 5957 / BAV1) protein is Polyribonucleotide nucleotidyltransferase.